A 47-amino-acid polypeptide reads, in one-letter code: MVAYPEISWTRNGCTVAKYPEISWTRNGCTVSKYPEISWTRNGCTVA.

Residues 1–3 (MVA) constitute a propeptide that is removed on maturation. Cys-14 carries S-farnesyl cysteine lipidation. A propeptide spanning residues 15–18 (TVAK) is cleaved from the precursor. The S-farnesyl cysteine moiety is linked to residue Cys-29. Residues 30 to 33 (TVSK) constitute a propeptide that is removed on maturation. A lipid anchor (S-farnesyl cysteine) is attached at Cys-44. Residues 45–47 (TVA) constitute a propeptide that is removed on maturation.

It localises to the cell membrane. Its function is as follows. Rhodotorucin-A is a mating pheromone in cells of mating type A of Rhodosporidium toruloides. This Rhodotorula toruloides (Yeast) protein is Rhodotorucin-A peptides type 3 (RHA3).